The following is a 79-amino-acid chain: Delta-hormotoxin-Cpt1a (79 aa).

The N-terminal stretch at 1–20 is a signal peptide; the sequence is MKTQVLAVFVLCVLFCLAES. Positions 21-31 are excised as a propeptide; that stretch reads RTTLNKRIDIA. 3 cysteine pairs are disulfide-bonded: cysteine 36-cysteine 75, cysteine 38-cysteine 66, and cysteine 56-cysteine 76.

Belongs to the sea anemone sodium channel inhibitory toxin family.

It is found in the secreted. The protein localises to the nematocyst. In terms of biological role, in neuromuscular preparation of crustaceans, the toxin increased neurotransmitter release, causing repetitive firing of the axons. May affect sodium channels (Nav). In Calliactis parasitica (Sea anemone), this protein is Delta-hormotoxin-Cpt1a.